The sequence spans 330 residues: 4-hydroxythreonine-4-phosphate dehydrogenase (330 aa).

Histidine 136 and threonine 137 together coordinate substrate. 3 residues coordinate a divalent metal cation: histidine 166, histidine 211, and histidine 266. Residues lysine 274, asparagine 283, and arginine 292 each contribute to the substrate site.

This sequence belongs to the PdxA family. As to quaternary structure, homodimer. Zn(2+) serves as cofactor. Requires Mg(2+) as cofactor. Co(2+) is required as a cofactor.

It is found in the cytoplasm. It catalyses the reaction 4-(phosphooxy)-L-threonine + NAD(+) = 3-amino-2-oxopropyl phosphate + CO2 + NADH. The protein operates within cofactor biosynthesis; pyridoxine 5'-phosphate biosynthesis; pyridoxine 5'-phosphate from D-erythrose 4-phosphate: step 4/5. In terms of biological role, catalyzes the NAD(P)-dependent oxidation of 4-(phosphooxy)-L-threonine (HTP) into 2-amino-3-oxo-4-(phosphooxy)butyric acid which spontaneously decarboxylates to form 3-amino-2-oxopropyl phosphate (AHAP). In Erwinia tasmaniensis (strain DSM 17950 / CFBP 7177 / CIP 109463 / NCPPB 4357 / Et1/99), this protein is 4-hydroxythreonine-4-phosphate dehydrogenase.